Reading from the N-terminus, the 75-residue chain is MNITKSYVVIFFLVMLTNSLSNSDILVSSVIETSKYDVCFIPCTRRYEDRECNDDCLAKDFNDGGCVDGRCCCKY.

The first 19 residues, 1–19 (MNITKSYVVIFFLVMLTNS), serve as a signal peptide directing secretion. 4 cysteine pairs are disulfide-bonded: C39–C73, C43–C66, C52–C71, and C56–C72.

The protein belongs to the DEFL family.

The protein resides in the secreted. The sequence is that of Defensin-like protein 59 from Arabidopsis thaliana (Mouse-ear cress).